Reading from the N-terminus, the 1227-residue chain is Splicing factor 3B subunit 3 (1227 aa).

This sequence belongs to the RSE1 family. As to quaternary structure, identified in the spliceosome A complex; remains associated with the spliceosome throughout the splicing process. Component of the spliceosome B complex. Identified in the spliceosome C complex. Identified in the spliceosome E complex. Component of the U11/U12 snRNPs that are part of the U12-type spliceosome. Component of splicing factor SF3B complex. Identified in the SAGA transcription regulatory histone acetylation (HAT) complex; the interaction is RNA-independent.

It localises to the nucleus. In terms of biological role, involved in pre-mRNA splicing as a component of the splicing factor SF3B complex, a constituent of the spliceosome. SF3B complex is required for 'A' complex assembly formed by the stable binding of U2 snRNP to the branchpoint sequence (BPS) in pre-mRNA. Sequence independent binding of SF3A/SF3B complex upstream of the branch site is essential, it may anchor U2 snRNP to the pre-mRNA. May also be involved in the assembly of the 'E' complex. Also belongs to the minor U12-dependent spliceosome, which is involved in the splicing of rare class of nuclear pre-mRNA intron. This Drosophila melanogaster (Fruit fly) protein is Splicing factor 3B subunit 3.